Here is a 107-residue protein sequence, read N- to C-terminus: Cell division protein FtsB (107 aa).

Residues 1-3 are Cytoplasmic-facing; that stretch reads MGK. A helical transmembrane segment spans residues 4–21; the sequence is LTLLLLILLGWLQYSLWL. Residues 22–107 lie on the Periplasmic side of the membrane; that stretch reads GKNGVHDFVR…IPSTQNNAQQ (86 aa). Residues 39 to 62 are a coiled coil; it reads QEVNNGKLKARNDQLFAEIDDLNG.

Belongs to the FtsB family. Part of a complex composed of FtsB, FtsL and FtsQ.

Its subcellular location is the cell inner membrane. In terms of biological role, essential cell division protein. May link together the upstream cell division proteins, which are predominantly cytoplasmic, with the downstream cell division proteins, which are predominantly periplasmic. The sequence is that of Cell division protein FtsB from Yersinia enterocolitica serotype O:8 / biotype 1B (strain NCTC 13174 / 8081).